A 160-amino-acid polypeptide reads, in one-letter code: uncharacterized protein (160 aa).

A signal peptide spans M1–A29. 2 helical membrane-spanning segments follow: residues T67–P87 and Q137–G157.

It to E.coli YdjM.

The protein resides in the cell membrane. This is an uncharacterized protein from Bacillus subtilis (strain 168).